A 631-amino-acid chain; its full sequence is 1-deoxy-D-xylulose-5-phosphate synthase (631 aa).

Thiamine diphosphate contacts are provided by residues H73, 113-115 (SHA), N174, Y285, and E367. N174 is a Mg(2+) binding site.

Belongs to the transketolase family. DXPS subfamily. Homodimer. It depends on Mg(2+) as a cofactor. Thiamine diphosphate is required as a cofactor.

It carries out the reaction D-glyceraldehyde 3-phosphate + pyruvate + H(+) = 1-deoxy-D-xylulose 5-phosphate + CO2. It participates in metabolic intermediate biosynthesis; 1-deoxy-D-xylulose 5-phosphate biosynthesis; 1-deoxy-D-xylulose 5-phosphate from D-glyceraldehyde 3-phosphate and pyruvate: step 1/1. Its function is as follows. Catalyzes the acyloin condensation reaction between C atoms 2 and 3 of pyruvate and glyceraldehyde 3-phosphate to yield 1-deoxy-D-xylulose-5-phosphate (DXP). The protein is 1-deoxy-D-xylulose-5-phosphate synthase of Streptomyces sp. (strain CL190).